Reading from the N-terminus, the 122-residue chain is Large ribosomal subunit protein uL14c (122 aa).

The protein belongs to the universal ribosomal protein uL14 family. In terms of assembly, part of the 50S ribosomal subunit.

The protein resides in the plastid. Its subcellular location is the chloroplast. Its function is as follows. Binds to 23S rRNA. The chain is Large ribosomal subunit protein uL14c from Liriodendron tulipifera (Tuliptree).